Reading from the N-terminus, the 97-residue chain is uncharacterized protein (97 aa).

This is an uncharacterized protein from Archaeoglobus fulgidus (strain ATCC 49558 / DSM 4304 / JCM 9628 / NBRC 100126 / VC-16).